The following is a 207-amino-acid chain: MQSYQQPLRVGVGGPVGSGKTALLEALCKAMRDHYQIAVVTNDIYTKEDQRILTEAGALEPERIVGVETGGCPHTAIREDASMNLAAVEALARKFGNLEVIFVESGGDNLSATFSPELADLTIYVIDVAEGEKIPRKGGPGITKSDFLVINKTDLAPYVGASLEVMERDTQRMRPQRPWTFSNLKKGEGLQAVIDFIVERGMLGVRG.

14–21 (GPVGSGKT) serves as a coordination point for GTP.

Belongs to the SIMIBI class G3E GTPase family. UreG subfamily. Homodimer. UreD, UreF and UreG form a complex that acts as a GTP-hydrolysis-dependent molecular chaperone, activating the urease apoprotein by helping to assemble the nickel containing metallocenter of UreC. The UreE protein probably delivers the nickel.

It is found in the cytoplasm. Functionally, facilitates the functional incorporation of the urease nickel metallocenter. This process requires GTP hydrolysis, probably effectuated by UreG. This is Urease accessory protein UreG from Pseudomonas putida (strain GB-1).